A 188-amino-acid chain; its full sequence is Elongation factor P-like protein (188 aa).

Belongs to the elongation factor P family.

The chain is Elongation factor P-like protein from Aliivibrio fischeri (strain ATCC 700601 / ES114) (Vibrio fischeri).